The following is a 198-amino-acid chain: Molybdopterin synthase catalytic subunit (198 aa).

Residues 107 to 108 (HR), Lys123, and 130 to 132 (KKE) each bind substrate.

It belongs to the MoaE family. MOCS2B subfamily. Heterotetramer; composed of 2 small (MOCS2A) and 2 large (MOCS2B) subunits.

It localises to the cytoplasm. The enzyme catalyses 2 [molybdopterin-synthase sulfur-carrier protein]-C-terminal-Gly-aminoethanethioate + cyclic pyranopterin phosphate + H2O = molybdopterin + 2 [molybdopterin-synthase sulfur-carrier protein]-C-terminal Gly-Gly + 2 H(+). It functions in the pathway cofactor biosynthesis; molybdopterin biosynthesis. Functionally, catalytic subunit of the molybdopterin synthase complex, a complex that catalyzes the conversion of precursor Z into molybdopterin. Acts by mediating the incorporation of 2 sulfur atoms from thiocarboxylated MOCS2A into precursor Z to generate a dithiolene group. The chain is Molybdopterin synthase catalytic subunit from Arabidopsis thaliana (Mouse-ear cress).